The sequence spans 610 residues: Glutamine--fructose-6-phosphate aminotransferase [isomerizing] (610 aa).

The active-site Nucleophile; for GATase activity is the Cys-2. The Glutamine amidotransferase type-2 domain occupies 2–218 (CGIVGAVAQR…EGDVAEITRR (217 aa)). SIS domains follow at residues 286–426 (AAEI…QQGR) and 459–600 (LATD…VDQP). Catalysis depends on Lys-605, which acts as the For Fru-6P isomerization activity.

Homodimer.

The protein localises to the cytoplasm. The enzyme catalyses D-fructose 6-phosphate + L-glutamine = D-glucosamine 6-phosphate + L-glutamate. Catalyzes the first step in hexosamine metabolism, converting fructose-6P into glucosamine-6P using glutamine as a nitrogen source. This chain is Glutamine--fructose-6-phosphate aminotransferase [isomerizing], found in Vibrio vulnificus (strain YJ016).